Reading from the N-terminus, the 288-residue chain is Protein FANTASTIC FOUR 3 (288 aa).

Residues 48–60 (HAEDTRNRNDDKA) are compositionally biased toward basic and acidic residues. 3 disordered regions span residues 48-100 (HAED…YYVQ), 146-172 (ETTT…PLTT), and 222-261 (NEFV…IENV). A compositionally biased stretch (low complexity) spans 66 to 90 (SDSSGWSSLQSLSSGSSSSTKTTTS). The FAF domain maps to 165–217 (DLPPPLTTMRGFQCIQMRPHRENGRLVMTATNAPPRNGCFQADRSNGRLRLSI). Positions 223-256 (EFVENEEETIEPEETEEYEEEEEEEEDEDEDEVM) are enriched in acidic residues.

This sequence belongs to the fantastic four family. As to expression, expressed in the shoot apex, stamens, young leaves and young siliques, but not in old leaves. Detected in provascular and vascular tissue, but not in the vegetative meristem. In inflorescences, restricted to the vasculature and absent from young flowers, except from anthers.

Its function is as follows. Able to repress WUS when constitutively overexpressed, but have no effect on CLV3. The chain is Protein FANTASTIC FOUR 3 (FAF3) from Arabidopsis thaliana (Mouse-ear cress).